Reading from the N-terminus, the 282-residue chain is Putative 4-diphosphocytidyl-2-C-methyl-D-erythritol kinase (282 aa).

Lysine 9 is an active-site residue. Residue 93–103 (PVSAGLAGGSA) participates in ATP binding. The active site involves aspartate 135.

This sequence belongs to the GHMP kinase family. IspE subfamily.

It catalyses the reaction 4-CDP-2-C-methyl-D-erythritol + ATP = 4-CDP-2-C-methyl-D-erythritol 2-phosphate + ADP + H(+). Its function is as follows. Catalyzes the phosphorylation of the position 2 hydroxy group of 4-diphosphocytidyl-2C-methyl-D-erythritol. The protein is Putative 4-diphosphocytidyl-2-C-methyl-D-erythritol kinase of Staphylococcus aureus (strain bovine RF122 / ET3-1).